Reading from the N-terminus, the 246-residue chain is Eukaryotic translation initiation factor 3 subunit K (246 aa).

Residues 1 to 21 are compositionally biased toward low complexity; that stretch reads MENDQDQQQQQQQSQQQQPQQ. Residues 1-30 form a disordered region; the sequence is MENDQDQQQQQQQSQQQQPQQEEQEQVDVD. Residues 72–235 enclose the PCI domain; it reads YLFQANSTLL…QKKADTFTFD (164 aa).

It belongs to the eIF-3 subunit K family. As to quaternary structure, component of the eukaryotic translation initiation factor 3 (eIF-3) complex.

It is found in the cytoplasm. Functionally, component of the eukaryotic translation initiation factor 3 (eIF-3) complex, which is involved in protein synthesis of a specialized repertoire of mRNAs and, together with other initiation factors, stimulates binding of mRNA and methionyl-tRNAi to the 40S ribosome. The eIF-3 complex specifically targets and initiates translation of a subset of mRNAs involved in cell proliferation. In Dictyostelium discoideum (Social amoeba), this protein is Eukaryotic translation initiation factor 3 subunit K (eif3K).